The primary structure comprises 405 residues: Protein NDRG4 (405 aa).

The interval 352–405 is disordered; the sequence is AGAVPSASMTRLARSRTASLTSASSVDGARPRPCTQSESSDGIGQINHTMEVSC. A compositionally biased stretch (low complexity) spans 361 to 376; it reads TRLARSRTASLTSASS. The span at 385–405 shows a compositional bias: polar residues; the sequence is CTQSESSDGIGQINHTMEVSC.

The protein belongs to the NDRG family.

The protein localises to the cytoplasm. The protein resides in the cytosol. Functionally, contributes to the maintenance of intracerebral BDNF levels within the normal range. May enhance growth factor-induced ERK1 and ERK2 phosphorylation. May attenuate growth factor-promoted ELK1 phosphorylation in a microtubule-dependent manner. The polypeptide is Protein NDRG4 (Xenopus tropicalis (Western clawed frog)).